A 201-amino-acid polypeptide reads, in one-letter code: Pyridoxal 5'-phosphate synthase subunit PdxT (201 aa).

50 to 52 serves as a coordination point for L-glutamine; the sequence is GES. Cysteine 82 functions as the Nucleophile in the catalytic mechanism. L-glutamine-binding positions include arginine 115 and 143–144; that span reads IR. Active-site charge relay system residues include histidine 179 and glutamate 181.

Belongs to the glutaminase PdxT/SNO family. As to quaternary structure, in the presence of PdxS, forms a dodecamer of heterodimers. Only shows activity in the heterodimer.

The catalysed reaction is aldehydo-D-ribose 5-phosphate + D-glyceraldehyde 3-phosphate + L-glutamine = pyridoxal 5'-phosphate + L-glutamate + phosphate + 3 H2O + H(+). It catalyses the reaction L-glutamine + H2O = L-glutamate + NH4(+). Its pathway is cofactor biosynthesis; pyridoxal 5'-phosphate biosynthesis. In terms of biological role, catalyzes the hydrolysis of glutamine to glutamate and ammonia as part of the biosynthesis of pyridoxal 5'-phosphate. The resulting ammonia molecule is channeled to the active site of PdxS. The polypeptide is Pyridoxal 5'-phosphate synthase subunit PdxT (Deinococcus geothermalis (strain DSM 11300 / CIP 105573 / AG-3a)).